A 495-amino-acid polypeptide reads, in one-letter code: Putative aldehyde dehydrogenase AldA (495 aa).

212–218 (GKGSESG) serves as a coordination point for NAD(+). Catalysis depends on residues glutamate 256 and cysteine 290.

Belongs to the aldehyde dehydrogenase family.

It catalyses the reaction an aldehyde + NAD(+) + H2O = a carboxylate + NADH + 2 H(+). This Staphylococcus aureus (strain USA300) protein is Putative aldehyde dehydrogenase AldA (aldA).